The chain runs to 235 residues: Motile sperm domain-containing protein 3 (235 aa).

Disordered stretches follow at residues 1–25 and 143–171; these read MRRGAPQDQELVGPGPPGRGSRGAP and ELQGQPDPAPRPGPPAGTPPPTARHFQEH. In terms of domain architecture, MSP spans 33 to 145; sequence PVLVFPPDLV…RAPAYPLELQ (113 aa). Over residues 149–164 the composition is skewed to pro residues; it reads DPAPRPGPPAGTPPPT. The next 2 helical transmembrane spans lie at 180-200 and 213-233; these read SFLLFLLTGIVSVAFLLLPLP and VSLGQKLVAAYVLGLLTMVFL.

The protein resides in the membrane. This chain is Motile sperm domain-containing protein 3 (MOSPD3), found in Homo sapiens (Human).